The primary structure comprises 127 residues: Ribonuclease P protein component 1 (127 aa).

This sequence belongs to the eukaryotic/archaeal RNase P protein component 1 family. In terms of assembly, consists of a catalytic RNA component and at least 4 protein subunits. Forms a subcomplex with Rnp4 which stimulates the catalytic RNA.

The protein localises to the cytoplasm. The enzyme catalyses Endonucleolytic cleavage of RNA, removing 5'-extranucleotides from tRNA precursor.. Part of ribonuclease P, a protein complex that generates mature tRNA molecules by cleaving their 5'-ends. The RNA is catalytic, but its KM for pre-tRNA is 170-fold decreased in the presence of the 4 known protein subunits (Rnp1-4). The protein subunits also decrease the amount of Mg(2+) needed for activity. This chain is Ribonuclease P protein component 1, found in Pyrococcus furiosus (strain ATCC 43587 / DSM 3638 / JCM 8422 / Vc1).